Here is a 124-residue protein sequence, read N- to C-terminus: Schlafen-like protein (124 aa).

It belongs to the Schlafen family. Subgroup poxviridae B3 subfamily.

This chain is Schlafen-like protein, found in Homo sapiens (Human).